The sequence spans 211 residues: Large ribosomal subunit protein bL25 (211 aa).

Residues 186 to 211 (GRALQSMDAAESAVEQPGEQPATAAG) form a disordered region.

The protein belongs to the bacterial ribosomal protein bL25 family. CTC subfamily. In terms of assembly, part of the 50S ribosomal subunit; part of the 5S rRNA/L5/L18/L25 subcomplex. Contacts the 5S rRNA. Binds to the 5S rRNA independently of L5 and L18.

Its function is as follows. This is one of the proteins that binds to the 5S RNA in the ribosome where it forms part of the central protuberance. The chain is Large ribosomal subunit protein bL25 from Gloeobacter violaceus (strain ATCC 29082 / PCC 7421).